Consider the following 822-residue polypeptide: Nose resistant to fluoxetine protein 6 (822 aa).

The first 24 residues, 1–24, serve as a signal peptide directing secretion; it reads MGNMRRLLIFAVLVILTVISNSKS. N236 carries N-linked (GlcNAc...) asparagine glycosylation. 3 helical membrane passes run 306–326, 617–637, and 655–675; these read LAMF…FGTL, PYIR…LNAW, and IICW…LYWF.

The protein belongs to the acyltransferase 3 family. In L1 larvae through to adult, hyp3 and hyp5, the most anterior cells in the hypodermis, and in intestine. Other hypodermal cells show weaker expression.

It is found in the membrane. Functionally, plays a role in the uptake of a range of molecules including lipids and xenobiotic compounds from the intestine to surrounding tissues. Mediates transport of lipids from intestine to the reproductive tract. Required for efficient yolk transport into oocytes. Vital for embryonic development. The sequence is that of Nose resistant to fluoxetine protein 6 (nrf-6) from Caenorhabditis elegans.